The primary structure comprises 161 residues: Pupal cuticle protein C1B (161 aa).

A run of 9 repeats spans residues 6–9, 14–17, 35–38, 87–90, 103–106, 112–115, 121–124, 130–133, and 143–146.

Functionally, component of the cuticle of the pupa of Tenebrio molitor. The polypeptide is Pupal cuticle protein C1B (Tenebrio molitor (Yellow mealworm beetle)).